The sequence spans 312 residues: Ribosomal protein L11 methyltransferase (312 aa).

S-adenosyl-L-methionine is bound by residues Thr-162, Gly-183, Asp-205, and Asn-248.

Belongs to the methyltransferase superfamily. PrmA family.

It is found in the cytoplasm. The enzyme catalyses L-lysyl-[protein] + 3 S-adenosyl-L-methionine = N(6),N(6),N(6)-trimethyl-L-lysyl-[protein] + 3 S-adenosyl-L-homocysteine + 3 H(+). In terms of biological role, methylates ribosomal protein L11. The polypeptide is Ribosomal protein L11 methyltransferase (Bacillus cereus (strain G9842)).